The primary structure comprises 424 residues: Histidine--tRNA ligase (424 aa).

Belongs to the class-II aminoacyl-tRNA synthetase family. As to quaternary structure, homodimer.

The protein localises to the cytoplasm. It carries out the reaction tRNA(His) + L-histidine + ATP = L-histidyl-tRNA(His) + AMP + diphosphate + H(+). This Shigella boydii serotype 18 (strain CDC 3083-94 / BS512) protein is Histidine--tRNA ligase.